Reading from the N-terminus, the 61-residue chain is DNA-directed RNA polymerase subunit Rpo6 (61 aa).

Belongs to the archaeal Rpo6/eukaryotic RPB6 RNA polymerase subunit family. Part of the RNA polymerase complex.

Its subcellular location is the cytoplasm. It carries out the reaction RNA(n) + a ribonucleoside 5'-triphosphate = RNA(n+1) + diphosphate. DNA-dependent RNA polymerase (RNAP) catalyzes the transcription of DNA into RNA using the four ribonucleoside triphosphates as substrates. This chain is DNA-directed RNA polymerase subunit Rpo6, found in Thermoplasma volcanium (strain ATCC 51530 / DSM 4299 / JCM 9571 / NBRC 15438 / GSS1).